The primary structure comprises 409 residues: L-cysteine:1D-myo-inositol 2-amino-2-deoxy-alpha-D-glucopyranoside ligase (409 aa).

Position 43 (Cys43) interacts with Zn(2+). L-cysteinyl-5'-AMP contacts are provided by residues 43–46, Thr58, and 81–83; these read CGIT and NVT. The 'HIGH' region signature appears at 45–55; the sequence is ITPYDATHMGH. The 'ERGGDP' region motif lies at 183–188; the sequence is ERGGDP. Trp224 is a binding site for L-cysteinyl-5'-AMP. Position 228 (Cys228) interacts with Zn(2+). Residue 246–248 coordinates L-cysteinyl-5'-AMP; the sequence is GSD. Residue His253 coordinates Zn(2+). Val280 provides a ligand contact to L-cysteinyl-5'-AMP. The 'KMSKS' region signature appears at 286–290; it reads KMSKS.

The protein belongs to the class-I aminoacyl-tRNA synthetase family. MshC subfamily. In terms of assembly, monomer. Zn(2+) is required as a cofactor.

The catalysed reaction is 1D-myo-inositol 2-amino-2-deoxy-alpha-D-glucopyranoside + L-cysteine + ATP = 1D-myo-inositol 2-(L-cysteinylamino)-2-deoxy-alpha-D-glucopyranoside + AMP + diphosphate + H(+). Functionally, catalyzes the ATP-dependent condensation of GlcN-Ins and L-cysteine to form L-Cys-GlcN-Ins. The sequence is that of L-cysteine:1D-myo-inositol 2-amino-2-deoxy-alpha-D-glucopyranoside ligase from Streptomyces griseus subsp. griseus (strain JCM 4626 / CBS 651.72 / NBRC 13350 / KCC S-0626 / ISP 5235).